The primary structure comprises 358 residues: Bi-functional coumaroyl CoA and feruloyl CoA ortho-hydroxylase F6H2-2-1 (358 aa).

The region spanning 200-308 (SKESLLMGSR…RISVPVFVNP (109 aa)) is the Fe2OG dioxygenase domain. Tyr216 is a 2-oxoglutarate binding site. The Fe cation site is built by His231, Asp233, and His289. Residues Arg299 and Ser301 each contribute to the 2-oxoglutarate site.

It belongs to the iron/ascorbate-dependent oxidoreductase family. The cofactor is L-ascorbate. Fe(2+) serves as cofactor. In terms of tissue distribution, mostly expressed in underground stems and stems.

It carries out the reaction (E)-4-coumaroyl-CoA + 2-oxoglutarate + O2 = (E)-2,4-dihydroxycinnamoyl-CoA + succinate + CO2. The enzyme catalyses (E)-feruloyl-CoA + 2-oxoglutarate + O2 = (E)-6-hydroxyferuloyl-CoA + succinate + CO2. It participates in phenylpropanoid metabolism. In terms of biological role, 2-oxoglutarate (OG)- and Fe(II)-dependent dioxygenase (2OGD) involved in scopoletin and umbelliferone biosynthesis. Converts feruloyl CoA into 6'-hydroxyferuloyl CoA, and p-coumaroyl CoA into 2,4-dihydroxycinnamoyl-CoA, but has no activity toward caffeoyl-CoA. This is Bi-functional coumaroyl CoA and feruloyl CoA ortho-hydroxylase F6H2-2-1 from Ipomoea batatas (Sweet potato).